The following is a 344-amino-acid chain: Dihydroorotate dehydrogenase (quinone) (344 aa).

Residues 65–69 and threonine 89 each bind FMN; that span reads AGLDK. Lysine 69 contacts substrate. 114 to 118 provides a ligand contact to substrate; sequence NRMGF. Residues asparagine 145 and asparagine 178 each contribute to the FMN site. Asparagine 178 contacts substrate. Serine 181 acts as the Nucleophile in catalysis. Asparagine 183 is a substrate binding site. FMN is bound by residues lysine 223 and threonine 251. A substrate-binding site is contributed by 252–253; sequence NT. Residues glycine 274, glycine 303, and 324–325 contribute to the FMN site; that span reads YS.

Belongs to the dihydroorotate dehydrogenase family. Type 2 subfamily. In terms of assembly, monomer. FMN is required as a cofactor.

It localises to the cell membrane. It carries out the reaction (S)-dihydroorotate + a quinone = orotate + a quinol. Its pathway is pyrimidine metabolism; UMP biosynthesis via de novo pathway; orotate from (S)-dihydroorotate (quinone route): step 1/1. Catalyzes the conversion of dihydroorotate to orotate with quinone as electron acceptor. The chain is Dihydroorotate dehydrogenase (quinone) from Cupriavidus taiwanensis (strain DSM 17343 / BCRC 17206 / CCUG 44338 / CIP 107171 / LMG 19424 / R1) (Ralstonia taiwanensis (strain LMG 19424)).